Reading from the N-terminus, the 44-residue chain is pyr operon leader peptide (44 aa).

The chain is pyr operon leader peptide (pyrL) from Escherichia coli O157:H7.